We begin with the raw amino-acid sequence, 439 residues long: Cobyrinate a,c-diamide synthase (439 aa).

In terms of domain architecture, GATase cobBQ-type spans 238 to 431; it reads KIAVAYDKAF…AHVNFLGNIE (194 aa). The active-site Nucleophile is Cys320.

The protein belongs to the CobB/CbiA family. The cofactor is Mg(2+).

The catalysed reaction is cob(II)yrinate + 2 L-glutamine + 2 ATP + 2 H2O = cob(II)yrinate a,c diamide + 2 L-glutamate + 2 ADP + 2 phosphate + 2 H(+). It functions in the pathway cofactor biosynthesis; adenosylcobalamin biosynthesis; cob(II)yrinate a,c-diamide from sirohydrochlorin (anaerobic route): step 10/10. In terms of biological role, catalyzes the ATP-dependent amidation of the two carboxylate groups at positions a and c of cobyrinate, using either L-glutamine or ammonia as the nitrogen source. The polypeptide is Cobyrinate a,c-diamide synthase (Clostridium tetani (strain Massachusetts / E88)).